A 432-amino-acid polypeptide reads, in one-letter code: 3-phosphoshikimate 1-carboxyvinyltransferase (432 aa).

3-phosphoshikimate is bound by residues Lys23, Ser24, and Arg28. A phosphoenolpyruvate-binding site is contributed by Lys23. Residues Gly95 and Arg123 each coordinate phosphoenolpyruvate. Positions 167, 169, 317, and 344 each coordinate 3-phosphoshikimate. Gln169 provides a ligand contact to phosphoenolpyruvate. The active-site Proton acceptor is the Asp317. Phosphoenolpyruvate contacts are provided by Arg348 and Arg390.

This sequence belongs to the EPSP synthase family. In terms of assembly, monomer.

The protein localises to the cytoplasm. The enzyme catalyses 3-phosphoshikimate + phosphoenolpyruvate = 5-O-(1-carboxyvinyl)-3-phosphoshikimate + phosphate. It participates in metabolic intermediate biosynthesis; chorismate biosynthesis; chorismate from D-erythrose 4-phosphate and phosphoenolpyruvate: step 6/7. Catalyzes the transfer of the enolpyruvyl moiety of phosphoenolpyruvate (PEP) to the 5-hydroxyl of shikimate-3-phosphate (S3P) to produce enolpyruvyl shikimate-3-phosphate and inorganic phosphate. The chain is 3-phosphoshikimate 1-carboxyvinyltransferase from Staphylococcus haemolyticus (strain JCSC1435).